Reading from the N-terminus, the 149-residue chain is UPF0260 protein Pfl01_1392 (149 aa).

The protein belongs to the UPF0260 family.

This chain is UPF0260 protein Pfl01_1392, found in Pseudomonas fluorescens (strain Pf0-1).